A 459-amino-acid polypeptide reads, in one-letter code: Cysteine--tRNA ligase (459 aa).

Zn(2+) is bound at residue Cys-27. The 'HIGH' region motif lies at Pro-29–His-39. The Zn(2+) site is built by Cys-202, His-231, and Glu-235. The 'KMSKS' region motif lies at Lys-263–Ser-267. Lys-266 lines the ATP pocket.

This sequence belongs to the class-I aminoacyl-tRNA synthetase family. As to quaternary structure, monomer. Zn(2+) is required as a cofactor.

It is found in the cytoplasm. The enzyme catalyses tRNA(Cys) + L-cysteine + ATP = L-cysteinyl-tRNA(Cys) + AMP + diphosphate. This is Cysteine--tRNA ligase from Campylobacter fetus subsp. fetus (strain 82-40).